The chain runs to 159 residues: MPYRSTEILSPGPADKAPLHRVTLTHDQRHLRRKLLHLENDDVVMLDLKEAVMLADGDLLALEGGGYIEVKAAEEALYEIRPRDRLHLIELAWHLGNRHLAAAIDEGRILIVRDPVIRAMLEGLGATVNEAVEPFHPLRGAYHGTGHHHHGHGHDPHHG.

Positions 140–159 (GAYHGTGHHHHGHGHDPHHG) are disordered.

It belongs to the UreE family.

The protein localises to the cytoplasm. Involved in urease metallocenter assembly. Binds nickel. Probably functions as a nickel donor during metallocenter assembly. The sequence is that of Urease accessory protein UreE from Sinorhizobium fredii (strain NBRC 101917 / NGR234).